The chain runs to 132 residues: Histone H2B.1 (132 aa).

Residues 1–13 (MSSKASKAPASKA) show a composition bias toward low complexity. The tract at residues 1-40 (MSSKASKAPASKAPAEKKPAAKKTSSSVDASKKRTKTRKE) is disordered. Lys-7 carries the post-translational modification N6-acetyllysine; alternate. A Glycyl lysine isopeptide (Lys-Gly) (interchain with G-Cter in SUMO); alternate cross-link involves residue Lys-7. Residue Ser-11 is modified to Phosphoserine. Position 12 is an N6-acetyllysine (Lys-12). Lys-17 bears the N6-acetyllysine; alternate mark. Lys-17 participates in a covalent cross-link: Glycyl lysine isopeptide (Lys-Gly) (interchain with G-Cter in SUMO); alternate. Residue Lys-18 forms a Glycyl lysine isopeptide (Lys-Gly) (interchain with G-Cter in SUMO) linkage. Lys-125 is covalently cross-linked (Glycyl lysine isopeptide (Lys-Gly) (interchain with G-Cter in ubiquitin)).

Belongs to the histone H2B family. As to quaternary structure, the nucleosome is a histone octamer containing two molecules each of H2A, H2B, H3 and H4 assembled in one H3-H4 heterotetramer and two H2A-H2B heterodimers. The octamer wraps approximately 147 bp of DNA. Post-translationally, monoubiquitinated by the UBC2-BRE1 complex to form H2BK123ub1. H2BK123ub1 gives a specific tag for epigenetic transcriptional activation and is also prerequisite for H3K4me and H3K79me formation. H2BK123ub1 also modulates the formation of double-strand breaks during meiosis and is a prerequisite for DNA-damage checkpoint activation. Phosphorylated by STE20 to form H2BS10ph during progression through meiotic prophase. May be correlated with chromosome condensation. In terms of processing, acetylated by GCN5 to form H2BK11ac and H2BK16ac. H2BK16ac can also be formed by ESA1. Acetylation of N-terminal lysines and particularly formation of H2BK11acK16ac has a positive effect on transcription. Post-translationally, sumoylation to form H2BK6su and probably also H2BK16su or H2BK17su, occurs preferentially near the telomeres and represses gene transcription.

It is found in the nucleus. It localises to the chromosome. In terms of biological role, core component of nucleosome. Nucleosomes wrap and compact DNA into chromatin, limiting DNA accessibility to the cellular machineries which require DNA as a template. Histones thereby play a central role in transcription regulation, DNA repair, DNA replication and chromosomal stability. DNA accessibility is regulated via a complex set of post-translational modifications of histones, also called histone code, and nucleosome remodeling. This chain is Histone H2B.1 (HTB1), found in Eremothecium gossypii (strain ATCC 10895 / CBS 109.51 / FGSC 9923 / NRRL Y-1056) (Yeast).